The primary structure comprises 132 residues: Inactive D-aminoacyl-tRNA deacylase (132 aa).

It belongs to the DTD family.

Its function is as follows. A non-functional D-aminoacyl-tRNA deacylase. This Bacillus subtilis (strain 168) protein is Inactive D-aminoacyl-tRNA deacylase.